The following is a 480-amino-acid chain: Peptidase S41 family protein ustP (480 aa).

The disordered stretch occupies residues 78–97 (CMPNKKSRPPDPRPSLAVGK). The segment at 134–336 (DVAVLQLPTF…LKQQGVRSIV (203 aa)) is peptidase S41 domain.

It belongs to the peptidase S41A family.

It functions in the pathway mycotoxin biosynthesis. Its function is as follows. Peptidase S41 family protein; part of the gene cluster that mediates the biosynthesis of the secondary metabolite ustiloxin B, an antimitotic tetrapeptide. First, ustA is processed by the subtilisin-like endoprotease Kex2 that is outside the ustiloxin B gene cluster, at the C-terminal side of Arg-Lys, after transfer to Golgi apparatus through the endoplasmic reticulum (ER). Cleavage by KEX2 generates 16 peptides YAIG-I to YAIG-XVI. To process the precursor peptide further, at least two peptidases are necessary to cleave the N-terminal and C-terminal sides of the Tyr-Ala-Ile-Gly core peptide which serves as backbone for the synthesis of ustiloxin B, through cyclization and modification of the tyrosine with a non-protein coding amino acid, norvaline. One of the two peptidases must be the serine peptidase ustP; and the other pepdidase is probably ustH. Macrocyclization of the core peptide derived from ustA requires the tyrosinase ustQ, as well as the homologous oxidases ustYa and ustYb, and leads to the production of the first cyclization product N-desmethylustiloxin F. For the formation of N-desmethylustiloxin F, three oxidation steps are required, hydroxylation at the benzylic position, hydroxylation at either the aromatic ring of Tyr or beta-position of Ile, and oxidative cyclization. UstQ may catalyze the oxidation of a phenol moiety, whereas the ustYa and ustYb are most likely responsible for the remaining two-step oxidations. N-desmethylustiloxin F is then methylated by ustM to yield ustiloxin F which in turn substrate of the cytochrome P450 monooxygenase ustC which catalyzes the formation of S-deoxyustiloxin H. The flavoprotein monooxygenases ustF1 and ustF2 then participate in the modification of the side chain of S-deoxyustiloxin H, leading to the synthesis of an oxime intermediate, via ustiloxin H. Finally, carboxylative dehydration performed by the cysteine desulfurase-like protein ustD yields ustiloxin B. The sequence is that of Peptidase S41 family protein ustP from Aspergillus flavus (strain ATCC 200026 / FGSC A1120 / IAM 13836 / NRRL 3357 / JCM 12722 / SRRC 167).